The following is a 306-amino-acid chain: Ribosomal protein L11 methyltransferase (306 aa).

S-adenosyl-L-methionine-binding residues include Thr-154, Gly-179, Asp-201, and Asn-242.

It belongs to the methyltransferase superfamily. PrmA family.

The protein resides in the cytoplasm. It catalyses the reaction L-lysyl-[protein] + 3 S-adenosyl-L-methionine = N(6),N(6),N(6)-trimethyl-L-lysyl-[protein] + 3 S-adenosyl-L-homocysteine + 3 H(+). Methylates ribosomal protein L11. This chain is Ribosomal protein L11 methyltransferase, found in Xanthomonas euvesicatoria pv. vesicatoria (strain 85-10) (Xanthomonas campestris pv. vesicatoria).